The sequence spans 440 residues: Cell division protein FtsA (440 aa).

A disordered region spans residues 396–440 (VSSSEEQEQHHHQNEVQQRPKGKQKTQAEHNKQSKMKKLLSMFWE).

It belongs to the FtsA/MreB family. As to quaternary structure, homodimer. Interacts with FtsZ.

Its subcellular location is the cell membrane. Cell division protein that is required for the assembly of the Z ring. May serve as a membrane anchor for the Z ring. Binds and hydrolyzes ATP. Also involved in sporulation. In Bacillus subtilis (strain 168), this protein is Cell division protein FtsA.